The following is a 221-amino-acid chain: Uracil-DNA glycosylase (221 aa).

The active-site Proton acceptor is the Asp63.

This sequence belongs to the uracil-DNA glycosylase (UDG) superfamily. UNG family.

Its subcellular location is the cytoplasm. The enzyme catalyses Hydrolyzes single-stranded DNA or mismatched double-stranded DNA and polynucleotides, releasing free uracil.. Excises uracil residues from the DNA which can arise as a result of misincorporation of dUMP residues by DNA polymerase or due to deamination of cytosine. This Blochmanniella floridana protein is Uracil-DNA glycosylase.